A 413-amino-acid polypeptide reads, in one-letter code: MKRVSEQAGNPDGNPQAHVPGMPVIAVIGDGQLARMMQTAAIELGQSLRLLAGARDASAAQVCADVVLGDYTNYDDLLKAVDGATAVTFDHEHVPNEHLTALIDAGYNDQPQPAALINAQDKLVMRERLAELGAPVPRFAPIESAQDAYDFWTLTSGQVCLKARRGGYDGKGVWFPNNESELTALVSDLSRRGVALMAEEKVGWSRELSVLVARTPSGEVATWPLTESVQRNGVCAEAVAPAPGVDPQLQQRAETLGEKIATELGVTGVLAVELFAFANESGAEDIAVNELAMRPHNTGHWTLVGSVTSQFEQHLRAVMDEPLGDTSTLAPVTVMANVLGADEDQRCQWASVPRSGAPVPATKVHLYGKGIAQGRKIGHVNLTGEDEEATRRDARLAADFLVNAAWSDNWSAK.

A disordered region spans residues 1-21 (MKRVSEQAGNPDGNPQAHVPG). ATP contacts are provided by residues lysine 122, lysine 162, 199 to 202 (EEKV), glutamate 207, and 289 to 290 (NE). An ATP-grasp domain is found at 126–319 (RERLAELGAP…QFEQHLRAVM (194 aa)).

The protein belongs to the PurK/PurT family. In terms of assembly, homodimer.

The enzyme catalyses 5-amino-1-(5-phospho-beta-D-ribosyl)imidazole + hydrogencarbonate + ATP = 5-carboxyamino-1-(5-phospho-D-ribosyl)imidazole + ADP + phosphate + 2 H(+). It functions in the pathway purine metabolism; IMP biosynthesis via de novo pathway; 5-amino-1-(5-phospho-D-ribosyl)imidazole-4-carboxylate from 5-amino-1-(5-phospho-D-ribosyl)imidazole (N5-CAIR route): step 1/2. Functionally, catalyzes the ATP-dependent conversion of 5-aminoimidazole ribonucleotide (AIR) and HCO(3)(-) to N5-carboxyaminoimidazole ribonucleotide (N5-CAIR). The chain is N5-carboxyaminoimidazole ribonucleotide synthase from Corynebacterium ammoniagenes (Brevibacterium ammoniagenes).